The primary structure comprises 320 residues: Cytochrome c biogenesis protein CcsA (320 aa).

8 helical membrane-spanning segments follow: residues 9 to 29 (ILIHISFSVVSIVITIYFLTL), 44 to 64 (GMIVTFFCITGLLAARWIYSG), 71 to 91 (LYESLIFLSWSFSIIHMVCYF), 99 to 119 (LNAITGPSAILTQGFATSGLL), 144 to 164 (MVLGYAALLCGSLLSVALLVI), 226 to 246 (IISLGFIFLTIGILSGAVWAN), 261 to 281 (WAFITWTIFAIYLHIRTNINL), and 287 to 307 (AIVASMGFLIIWICYFGVNLL).

The protein belongs to the CcmF/CycK/Ccl1/NrfE/CcsA family. As to quaternary structure, may interact with Ccs1.

Its subcellular location is the plastid. The protein localises to the chloroplast thylakoid membrane. In terms of biological role, required during biogenesis of c-type cytochromes (cytochrome c6 and cytochrome f) at the step of heme attachment. In Carica papaya (Papaya), this protein is Cytochrome c biogenesis protein CcsA.